The following is a 403-amino-acid chain: Indoleamine 2,3-dioxygenase 1 (403 aa).

Heme b is bound at residue H346. The disordered stretch occupies residues 360-381; it reads QQPKENKTSEDPSKLEAKGTGG. Over residues 363–376 the composition is skewed to basic and acidic residues; that stretch reads KENKTSEDPSKLEA.

This sequence belongs to the indoleamine 2,3-dioxygenase family. In terms of assembly, monomer. The cofactor is heme b. Expressed in mature dendritic cells located in lymphoid organs (including lymph nodes, spleen, tonsils, Peyers's patches, the gut lamina propria, and the thymic medulla), in some epithelial cells of the female genital tract, as well as in endothelial cells of term placenta and in lung parenchyma. Weakly or not expressed in most normal tissues, but mostly inducible in most tissues. Expressed in more than 50% of tumors, either by tumoral, stromal, or endothelial cells (expression in tumor is associated with a worse clinical outcome). Not overexpressed in tumor-draining lymph nodes.

Its subcellular location is the cytoplasm. The protein localises to the cytosol. It carries out the reaction D-tryptophan + O2 = N-formyl-D-kynurenine. It catalyses the reaction L-tryptophan + O2 = N-formyl-L-kynurenine. It participates in amino-acid degradation; L-tryptophan degradation via kynurenine pathway; L-kynurenine from L-tryptophan: step 1/2. Activity is inhibited by and MTH-trp (methylthiohydantoin-DL-tryptophan), modestly inhibited by L-1MT (1-methyl-L-tryptophan) but not D-1MT (1-methyl-D-tryptophan). In terms of biological role, catalyzes the first and rate limiting step of the catabolism of the essential amino acid tryptophan along the kynurenine pathway. Involved in the peripheral immune tolerance, contributing to maintain homeostasis by preventing autoimmunity or immunopathology that would result from uncontrolled and overreacting immune responses. Tryptophan shortage inhibits T lymphocytes division and accumulation of tryptophan catabolites induces T-cell apoptosis and differentiation of regulatory T-cells. Acts as a suppressor of anti-tumor immunity. Limits the growth of intracellular pathogens by depriving tryptophan. Protects the fetus from maternal immune rejection. The sequence is that of Indoleamine 2,3-dioxygenase 1 from Homo sapiens (Human).